A 214-amino-acid chain; its full sequence is Pyridoxine/pyridoxamine 5'-phosphate oxidase (214 aa).

Residues 11-14 and Lys-68 contribute to the substrate site; that span reads RREY. FMN-binding positions include 63 to 68, 78 to 79, Arg-84, Lys-85, and Gln-107; these read RLVLLK and FT. Substrate contacts are provided by Tyr-125 and Arg-129. Residues 142–143 and Trp-187 each bind FMN; that span reads QS. 193–195 provides a ligand contact to substrate; the sequence is RLH. Arg-197 serves as a coordination point for FMN.

Belongs to the pyridoxamine 5'-phosphate oxidase family. As to quaternary structure, homodimer. Requires FMN as cofactor.

It catalyses the reaction pyridoxamine 5'-phosphate + O2 + H2O = pyridoxal 5'-phosphate + H2O2 + NH4(+). The catalysed reaction is pyridoxine 5'-phosphate + O2 = pyridoxal 5'-phosphate + H2O2. The protein operates within cofactor metabolism; pyridoxal 5'-phosphate salvage; pyridoxal 5'-phosphate from pyridoxamine 5'-phosphate: step 1/1. It participates in cofactor metabolism; pyridoxal 5'-phosphate salvage; pyridoxal 5'-phosphate from pyridoxine 5'-phosphate: step 1/1. Its function is as follows. Catalyzes the oxidation of either pyridoxine 5'-phosphate (PNP) or pyridoxamine 5'-phosphate (PMP) into pyridoxal 5'-phosphate (PLP). This Blochmanniella floridana protein is Pyridoxine/pyridoxamine 5'-phosphate oxidase.